Here is a 160-residue protein sequence, read N- to C-terminus: Phosphopantetheine adenylyltransferase (160 aa).

Residue S9 coordinates substrate. Residues 9–10 and H17 contribute to the ATP site; that span reads SF. Positions 41, 73, and 87 each coordinate substrate. ATP is bound by residues 88-90, E98, and 122-128; these read GLR and YSFVSSS.

This sequence belongs to the bacterial CoaD family. As to quaternary structure, homohexamer. Mg(2+) is required as a cofactor.

Its subcellular location is the cytoplasm. The catalysed reaction is (R)-4'-phosphopantetheine + ATP + H(+) = 3'-dephospho-CoA + diphosphate. Its pathway is cofactor biosynthesis; coenzyme A biosynthesis; CoA from (R)-pantothenate: step 4/5. Functionally, reversibly transfers an adenylyl group from ATP to 4'-phosphopantetheine, yielding dephospho-CoA (dPCoA) and pyrophosphate. The protein is Phosphopantetheine adenylyltransferase of Mycolicibacterium vanbaalenii (strain DSM 7251 / JCM 13017 / BCRC 16820 / KCTC 9966 / NRRL B-24157 / PYR-1) (Mycobacterium vanbaalenii).